The sequence spans 339 residues: DNA-directed RNA polymerase subunit alpha (339 aa).

The tract at residues 1 to 233 is alpha N-terminal domain (alpha-NTD); that stretch reads MVREKVRIST…DLFIPFLHAE (233 aa). Residues 267–339 form an alpha C-terminal domain (alpha-CTD) region; that stretch reads IALKSIFIDQ…FTINLPKNKF (73 aa).

This sequence belongs to the RNA polymerase alpha chain family. As to quaternary structure, in plastids the minimal PEP RNA polymerase catalytic core is composed of four subunits: alpha, beta, beta', and beta''. When a (nuclear-encoded) sigma factor is associated with the core the holoenzyme is formed, which can initiate transcription.

Its subcellular location is the plastid. It localises to the chloroplast. The catalysed reaction is RNA(n) + a ribonucleoside 5'-triphosphate = RNA(n+1) + diphosphate. Its function is as follows. DNA-dependent RNA polymerase catalyzes the transcription of DNA into RNA using the four ribonucleoside triphosphates as substrates. The chain is DNA-directed RNA polymerase subunit alpha from Populus trichocarpa (Western balsam poplar).